We begin with the raw amino-acid sequence, 66 residues long: Large ribosomal subunit protein uL29 (66 aa).

Belongs to the universal ribosomal protein uL29 family.

The protein is Large ribosomal subunit protein uL29 of Bartonella henselae (strain ATCC 49882 / DSM 28221 / CCUG 30454 / Houston 1) (Rochalimaea henselae).